Reading from the N-terminus, the 1792-residue chain is uncharacterized protein (1792 aa).

Positions 1–28 are enriched in low complexity; it reads MNNNNNNNNNSNNNNNSNNNNNGNSNNN. Disordered regions lie at residues 1–34, 162–187, 440–461, 544–568, 736–777, 837–979, 1044–1071, 1084–1106, 1160–1215, 1257–1290, 1651–1686, 1704–1731, and 1742–1761; these read MNNNNNNNNNSNNNNNSNNNNNGNSNNNFFSGKG, TNISNNNKQPISSNQHPYQQKQSHHH, KKRKKKERKKNENIYNNRNKSS, VIDDNKKRNKKEKKKTIPNNDSIIN, NKNK…INSN, TKGK…NDLK, VSKSNIPSSFSSPPKETNNKNDIDKEQS, NMNNEKSKDLYFNKNDIDNNDNK, TSSG…VLER, NITANNNNDNNKNNDNDNNNNNNDNIINNNNNNG, LRSKSDTKSKEHKKKDKKYKMLFKKKEGKGKPGRKK, PRKKYERVKPRKSKNAMMNEEKSGNSEK, and IENKHKSKKGRKPKESNLNN. The span at 169-182 shows a compositional bias: polar residues; the sequence is KQPISSNQHPYQQK. Over residues 550–559 the composition is skewed to basic residues; that stretch reads KRNKKEKKKT. A compositionally biased stretch (low complexity) spans 741–776; it reads PNNINSNDNNNKNDDNNNNNNKNVDGNNNNNNNINS. The segment covering 838 to 847 has biased composition (basic residues); the sequence is KGKKKGRKKK. Over residues 856 to 873 the composition is skewed to basic and acidic residues; the sequence is NIKEDIKSSKKDKKKDNI. Positions 874–924 are enriched in low complexity; sequence NDNNNDNNNDNNNDNNNDNNNDNNNDNNNDNNNNNNNNNNNNNNNNNNNHN. The segment covering 943-954 has biased composition (basic residues); the sequence is KKKTRQYRKKSK. A compositionally biased stretch (basic and acidic residues) spans 955 to 966; that stretch reads ITNDDNNEKIKQ. A compositionally biased stretch (low complexity) spans 1045 to 1057; it reads SKSNIPSSFSSPP. Basic and acidic residues-rich tracts occupy residues 1060 to 1071, 1088 to 1106, and 1166 to 1192; these read TNNKNDIDKEQS, EKSKDLYFNKNDIDNNDNK, and NKEENNKKEDDEKHFDDNTNEQKKNVD. Positions 1205–1215 are enriched in basic residues; the sequence is RKKRKKDVLER. Over residues 1261–1289 the composition is skewed to low complexity; that stretch reads NNNNDNNKNNDNDNNNNNNDNIINNNNNN. Basic residues-rich tracts occupy residues 1660-1686 and 1704-1717; these read KEHKKKDKKYKMLFKKKEGKGKPGRKK and PRKKYERVKPRKSK.

This is an uncharacterized protein from Plasmodium falciparum (isolate 3D7).